The following is a 255-amino-acid chain: Type III pantothenate kinase (255 aa).

Residue 6-13 coordinates ATP; the sequence is DIGNTNIK. A substrate-binding site is contributed by 107-110; it reads GADR. Asp109 functions as the Proton acceptor in the catalytic mechanism. Thr132 lines the ATP pocket. Thr184 contacts substrate.

This sequence belongs to the type III pantothenate kinase family. In terms of assembly, homodimer. Requires NH4(+) as cofactor. It depends on K(+) as a cofactor.

It localises to the cytoplasm. It carries out the reaction (R)-pantothenate + ATP = (R)-4'-phosphopantothenate + ADP + H(+). The protein operates within cofactor biosynthesis; coenzyme A biosynthesis; CoA from (R)-pantothenate: step 1/5. Its function is as follows. Catalyzes the phosphorylation of pantothenate (Pan), the first step in CoA biosynthesis. This chain is Type III pantothenate kinase, found in Roseiflexus sp. (strain RS-1).